A 269-amino-acid polypeptide reads, in one-letter code: Indole-3-glycerol phosphate synthase (269 aa).

Belongs to the TrpC family.

It carries out the reaction 1-(2-carboxyphenylamino)-1-deoxy-D-ribulose 5-phosphate + H(+) = (1S,2R)-1-C-(indol-3-yl)glycerol 3-phosphate + CO2 + H2O. It functions in the pathway amino-acid biosynthesis; L-tryptophan biosynthesis; L-tryptophan from chorismate: step 4/5. In Roseiflexus sp. (strain RS-1), this protein is Indole-3-glycerol phosphate synthase.